Here is a 458-residue protein sequence, read N- to C-terminus: Argininosuccinate lyase (458 aa).

This sequence belongs to the lyase 1 family. Argininosuccinate lyase subfamily.

It localises to the cytoplasm. It catalyses the reaction 2-(N(omega)-L-arginino)succinate = fumarate + L-arginine. It participates in amino-acid biosynthesis; L-arginine biosynthesis; L-arginine from L-ornithine and carbamoyl phosphate: step 3/3. The polypeptide is Argininosuccinate lyase (Actinobacillus pleuropneumoniae serotype 7 (strain AP76)).